The chain runs to 400 residues: Enoyl-[acyl-carrier-protein] reductase [NADH] (400 aa).

Residues 48-53 (GASSGY), 74-75 (FE), 111-112 (DA), and 139-140 (LA) each bind NAD(+). Residue tyrosine 225 participates in substrate binding. Tyrosine 235 serves as the catalytic Proton donor. NAD(+)-binding positions include lysine 244 and 273-275 (VVT).

Belongs to the TER reductase family. Monomer.

It carries out the reaction a 2,3-saturated acyl-[ACP] + NAD(+) = a (2E)-enoyl-[ACP] + NADH + H(+). It participates in lipid metabolism; fatty acid biosynthesis. Involved in the final reduction of the elongation cycle of fatty acid synthesis (FAS II). Catalyzes the reduction of a carbon-carbon double bond in an enoyl moiety that is covalently linked to an acyl carrier protein (ACP). The chain is Enoyl-[acyl-carrier-protein] reductase [NADH] from Marinomonas sp. (strain MWYL1).